A 227-amino-acid chain; its full sequence is Cytidylate kinase (227 aa).

12-20 contributes to the ATP binding site; it reads GPSGAGKGT.

Belongs to the cytidylate kinase family. Type 1 subfamily.

Its subcellular location is the cytoplasm. The enzyme catalyses CMP + ATP = CDP + ADP. It catalyses the reaction dCMP + ATP = dCDP + ADP. The sequence is that of Cytidylate kinase from Xanthomonas euvesicatoria pv. vesicatoria (strain 85-10) (Xanthomonas campestris pv. vesicatoria).